The sequence spans 132 residues: Transcriptional regulator MraZ (132 aa).

2 SpoVT-AbrB domains span residues 5 to 47 and 76 to 119; these read TYEH…SKDD and TVEI…SKNK.

Belongs to the MraZ family. In terms of assembly, forms oligomers.

It is found in the cytoplasm. The protein localises to the nucleoid. This chain is Transcriptional regulator MraZ, found in Mycoplasma capricolum subsp. capricolum (strain California kid / ATCC 27343 / NCTC 10154).